The sequence spans 285 residues: TATA box-binding protein-associated factor RNA polymerase I subunit D (285 aa).

Disordered regions lie at residues 1–49 and 85–112; these read MAQS…RIPT and KKKR…TRNI. A compositionally biased stretch (polar residues) spans 21–39; the sequence is GNQSDDSSNSSLFKTQCVP. Serine 24 is modified (phosphoserine). The span at 85-104 shows a compositional bias: basic residues; the sequence is KKKRKKRKKRKYKPKLRRQG. Serine 134 bears the Phosphoserine mark. Residues 193-219 are disordered; the sequence is HKYMDDDGPLSPIEEPSTEDEATDPQS. Position 229 is a phosphoserine (serine 229). Basic and acidic residues-rich tracts occupy residues 242 to 264 and 273 to 285; these read NLEQ…KDAT and KGGE…SEVS. Residues 242–285 form a disordered region; sequence NLEQGKIKKESAFSKKSKAKDATQRGNRRSWKGGEHACLHSEVS.

As to quaternary structure, component of the transcription factor SL1/TIF-IB complex, composed of TBP and at least TAF1A, TAF1B, TAF1C and TAF1D. Interacts with UBTF.

The protein resides in the nucleus. Its function is as follows. Component of the transcription factor SL1/TIF-IB complex, which is involved in the assembly of the PIC (preinitiation complex) during RNA polymerase I-dependent transcription. The rate of PIC formation probably is primarily dependent on the rate of association of SL1/TIF-IB with the rDNA promoter. SL1/TIF-IB is involved in stabilization of nucleolar transcription factor 1/UBTF on rDNA. Formation of SL1/TIF-IB excludes the association of TBP with TFIID subunits. The sequence is that of TATA box-binding protein-associated factor RNA polymerase I subunit D (Taf1d) from Rattus norvegicus (Rat).